We begin with the raw amino-acid sequence, 1372 residues long: MIKKIIVVVAFMLTGFSLTAMSASAEEITDLFLQKEVTYSGVEGGKIGENWKYPQFVGEKAVDGDETTRWSADKQDEQWLIVDLGEVKNIGELVLQLHAESPVYEILVSTDGESYQSIFKEENGKGGQPTKKYIDGNNVQARFVKYQQMKMWQHTNKQFYSSSIISFEAYEKKRLPEAIKLLTENLTISEKRKQQLAFEVSPAGVDITEDQIEWSSSDPTIVTVDQTGNLTAVKSGEAKVTVKIKGTEISDTIPVTVVAENKQYAEMRAKWKMRLLGTTQYDNDADVQQYRAQIATESLALWQTLNQAADREYLWERKPSDTVSADYTTQFTNIKKLALGYYEPSSELFEKPEVYDAIVKGIEFMIDTKKYNGTYYTGNWWDWQIGSAQPLTDTLILLHDDLLNTDAEKLNKFTAPLMLYAKDPNIQWPIYRATGANLTDISITVLGTGLLLEDNQRLVQVQEAVPSVLKSVSSGDGLYPDGSLIQHGYFPYNGSYGNELLKGFGRIQTILQGSDWEMNDPNISNLFNVVDKGYLQLMVNGKMPSMVSGRSISRAPETNPFTTEFESGKETIANLTLIAKFAPENLRNDIYTSIQTWLQQSGSYYHFFKKPRDFEALIDLKNVVNSASPAQATPMQSLNVYGSMDRVLQKNNEYAVGISMYSQRVGNYEFGNTENKKGWHTADGMLYLYNQDFAQFDEGYWATIDPYRLPGTTVDTRELANGAYTGKRSPQSWVGGSNNGQVASIGMFLDKSNEGMNLVAKKSWFLLDGQIINLGSGITGTTDASIETILDNRMIHPQEVKLNQGSDKDNSWISLSAANPLNNIGYVFPNSMNTLDVQIEERSGRYGDINEYFVNDKTYTNTFAKISKNYGKTVENGTYEYLTVVGKTNEEIAALSKNKGYTVLENTANLQAIEAGNYVMMNTWNNDQEIAGLYAYDPMSVISEKIDNGVYRLTLANPLQNNASVSIEFDKGILEVVAADPEISVDQNIITLNSAGLNGSSRSIIVKTTPEVTKEALEKLIQEQKEHQEKDYTASSWKVYSEALKQAQTVADQTTATQAEVDQAETELRSAVKQLVKVPTKEVDKTNLLKIIKENEKHQEKDYTASSWKVYSEALKQAQTVADQTTATQAEVDQAEAKLRSAVKQLVKVPTKEVDKTNLLKIIKENEKHQEKDYTASSWKVYSEALKQAQTVADQTTATQAEVDQAETELRSAVKQLVKVPTKEVDKTNLLKIIKENEKHQEKDYTASSWKVYSEALKQAQTVADQTTATQAEVDQAEAKLRSAVKRLTLKNSGENKKEQKNGGNNGHLNTSTGVDQTGTKQVKPSSQGGFRKASQFLPSTGEKKSIALVIIGLLVIASGCLLVFRKSKSKK.

The N-terminal stretch at 1–25 (MIKKIIVVVAFMLTGFSLTAMSASA) is a signal peptide. Residues 63–172 (DGDETTRWSA…SIISFEAYEK (110 aa)) form the F5/8 type C domain. A BIG2 domain is found at 183–242 (TENLTISEKRKQQLAFEVSPAGVDITEDQIEWSSSDPTIVTVDQTGNLTAVKSGEAKVTV). Residues His487, Tyr496, and Arg550 contribute to the active site. 4 consecutive FIVAR domains span residues 1014-1075 (KEAL…VKQL), 1084-1146 (DKTN…VKQL), 1155-1217 (DKTN…VKQL), and 1226-1288 (DKTN…VKRL). Positions 1288–1336 (LTLKNSGENKKEQKNGGNNGHLNTSTGVDQTGTKQVKPSSQGGFRKASQ) are disordered. The span at 1308-1329 (HLNTSTGVDQTGTKQVKPSSQG) shows a compositional bias: polar residues. The short motif at 1338–1342 (LPSTG) is the LPXTG sorting signal element. Thr1341 carries the post-translational modification Pentaglycyl murein peptidoglycan amidated threonine. Positions 1342–1372 (GEKKSIALVIIGLLVIASGCLLVFRKSKSKK) are cleaved as a propeptide — removed by sortase.

The protein belongs to the polysaccharide lyase 8 family.

It is found in the secreted. Its subcellular location is the cell wall. Functionally, has a very modest degradation activity against heparin sodium salt (HS) in vitro. Involved in the pathogenesis of vancomycin-resistant E.faecalis infections. The chain is Polysaccharide lyase 8 family protein HylA from Enterococcus faecalis (strain ATCC 700802 / V583).